The primary structure comprises 611 residues: MSKIIGIDLGTTNSCVAVMEGGEPKVIPNPEGNRTTPSVVAFKNEERQVGEVAKRQAITNPNTIMSVKRHMGTDYKVEIEGKEYTPQEISAIILQNLKASAEAYLGETVTKAVITVPAYFNDAERQATKDAGRIAGLEVERIINEPTAAALAYGLEKQDEEQKILVYDLGGGTFDVSILELADGTFEVISTAGDNRLGGDDFDQVIIDHLVAEFKKENNIDLSQDKMALQRLKDAAEKAKKDLSGVTQTQISLPFISAGAAGPLHLELTLTRAKFEELSANLVERTLEPTRRALKDAGLSASELDRVILVGGSTRIPAVQEAIKRETGKEPYKGVNPDEVVALGAAVQGGVLTGDVEGVLLLDVTPLSLGIETMGGVFTKLIERNTTIPTSKSQVFSTAADNQPAVDIHVLQGERPMSADNKTLGRFQLTDIPPAPRGIPQIEVTFDIDANGIVNVRAKDLGTSKEQAITIQSSSGLSDEEVDRMVKEAEANADADQKRKEEVELRNEADQLVFQTDKVVKDLEGKVDAAEVAKATEAKEALQAAIEKNELEEIRAKKDALQEIVQQLTVKLYEQAQAAAGQAEGAQGAQDAGAKKDNVVDAEFEEVKEDK.

The residue at position 173 (T173) is a Phosphothreonine; by autocatalysis. A compositionally biased stretch (low complexity) spans 579–592; that stretch reads AAGQAEGAQGAQDA. The disordered stretch occupies residues 579–598; that stretch reads AAGQAEGAQGAQDAGAKKDN.

Belongs to the heat shock protein 70 family.

Its function is as follows. Acts as a chaperone. This Bacillus cereus (strain AH187) protein is Chaperone protein DnaK.